The sequence spans 141 residues: uncharacterized protein (141 aa).

The protein localises to the mitochondrion. This is an uncharacterized protein from Arabidopsis thaliana (Mouse-ear cress).